The primary structure comprises 330 residues: Phosphate acyltransferase (330 aa).

Belongs to the PlsX family. Homodimer. Probably interacts with PlsY.

Its subcellular location is the cytoplasm. The enzyme catalyses a fatty acyl-[ACP] + phosphate = an acyl phosphate + holo-[ACP]. It participates in lipid metabolism; phospholipid metabolism. Its function is as follows. Catalyzes the reversible formation of acyl-phosphate (acyl-PO(4)) from acyl-[acyl-carrier-protein] (acyl-ACP). This enzyme utilizes acyl-ACP as fatty acyl donor, but not acyl-CoA. In Streptococcus pneumoniae (strain 70585), this protein is Phosphate acyltransferase.